The chain runs to 597 residues: Elongation factor 4 (597 aa).

The region spanning 2–184 (DHIRNFSIIA…SLIAKVPPPK (183 aa)) is the tr-type G domain. GTP is bound by residues 14-19 (DHGKST) and 131-134 (NKID).

Belongs to the TRAFAC class translation factor GTPase superfamily. Classic translation factor GTPase family. LepA subfamily.

The protein localises to the cell inner membrane. The enzyme catalyses GTP + H2O = GDP + phosphate + H(+). Its function is as follows. Required for accurate and efficient protein synthesis under certain stress conditions. May act as a fidelity factor of the translation reaction, by catalyzing a one-codon backward translocation of tRNAs on improperly translocated ribosomes. Back-translocation proceeds from a post-translocation (POST) complex to a pre-translocation (PRE) complex, thus giving elongation factor G a second chance to translocate the tRNAs correctly. Binds to ribosomes in a GTP-dependent manner. The protein is Elongation factor 4 of Burkholderia cenocepacia (strain HI2424).